The following is a 370-amino-acid chain: Histidinol-phosphate aminotransferase (370 aa).

Lysine 230 bears the N6-(pyridoxal phosphate)lysine mark.

It belongs to the class-II pyridoxal-phosphate-dependent aminotransferase family. Histidinol-phosphate aminotransferase subfamily. Homodimer. The cofactor is pyridoxal 5'-phosphate.

The catalysed reaction is L-histidinol phosphate + 2-oxoglutarate = 3-(imidazol-4-yl)-2-oxopropyl phosphate + L-glutamate. Its pathway is amino-acid biosynthesis; L-histidine biosynthesis; L-histidine from 5-phospho-alpha-D-ribose 1-diphosphate: step 7/9. The chain is Histidinol-phosphate aminotransferase from Leptospira interrogans serogroup Icterohaemorrhagiae serovar Lai (strain 56601).